The primary structure comprises 238 residues: tRNA (guanine-N(7)-)-methyltransferase (238 aa).

The S-adenosyl-L-methionine site is built by E70, D95, D122, and D145. The active site involves D145. Residues K149, D181, and T216 to E219 each bind substrate.

This sequence belongs to the class I-like SAM-binding methyltransferase superfamily. TrmB family.

The enzyme catalyses guanosine(46) in tRNA + S-adenosyl-L-methionine = N(7)-methylguanosine(46) in tRNA + S-adenosyl-L-homocysteine. It participates in tRNA modification; N(7)-methylguanine-tRNA biosynthesis. In terms of biological role, catalyzes the formation of N(7)-methylguanine at position 46 (m7G46) in tRNA. This chain is tRNA (guanine-N(7)-)-methyltransferase, found in Neisseria meningitidis serogroup C / serotype 2a (strain ATCC 700532 / DSM 15464 / FAM18).